A 240-amino-acid chain; its full sequence is Large ribosomal subunit protein uL3 (240 aa).

2 disordered regions span residues 138–158 (SISH…KTFK) and 215–240 (EAPL…SAEG). Gln-151 carries the N5-methylglutamine modification.

This sequence belongs to the universal ribosomal protein uL3 family. In terms of assembly, part of the 50S ribosomal subunit. Forms a cluster with proteins L14 and L19. Methylated by PrmB.

In terms of biological role, one of the primary rRNA binding proteins, it binds directly near the 3'-end of the 23S rRNA, where it nucleates assembly of the 50S subunit. This Beijerinckia indica subsp. indica (strain ATCC 9039 / DSM 1715 / NCIMB 8712) protein is Large ribosomal subunit protein uL3.